The primary structure comprises 487 residues: Acetyl-coenzyme A carboxylase carboxyl transferase subunit beta, chloroplastic (487 aa).

Residues 180–201 (SRNSSENEGSSKRTRTKGSDLT) are disordered. Residues 218–487 (LWVQCENCYG…PLNQKSSKIK (270 aa)) enclose the CoA carboxyltransferase N-terminal domain. Zn(2+)-binding residues include Cys-222, Cys-225, Cys-241, and Cys-244. Residues 222-244 (CENCYGLNYKKFLKSKMNICEQC) form a C4-type zinc finger.

This sequence belongs to the AccD/PCCB family. As to quaternary structure, acetyl-CoA carboxylase is a heterohexamer composed of biotin carboxyl carrier protein, biotin carboxylase and 2 subunits each of ACCase subunit alpha and ACCase plastid-coded subunit beta (accD). The cofactor is Zn(2+).

Its subcellular location is the plastid. The protein localises to the chloroplast stroma. The enzyme catalyses N(6)-carboxybiotinyl-L-lysyl-[protein] + acetyl-CoA = N(6)-biotinyl-L-lysyl-[protein] + malonyl-CoA. It participates in lipid metabolism; malonyl-CoA biosynthesis; malonyl-CoA from acetyl-CoA: step 1/1. Functionally, component of the acetyl coenzyme A carboxylase (ACC) complex. Biotin carboxylase (BC) catalyzes the carboxylation of biotin on its carrier protein (BCCP) and then the CO(2) group is transferred by the transcarboxylase to acetyl-CoA to form malonyl-CoA. In Atropa belladonna (Belladonna), this protein is Acetyl-coenzyme A carboxylase carboxyl transferase subunit beta, chloroplastic.